A 99-amino-acid polypeptide reads, in one-letter code: Transmembrane protein 14A (99 aa).

Transmembrane regions (helical) follow at residues 1 to 21, 24 to 44, and 79 to 99; these read MDLIGFGYAALVTIGSVLGYK, GGVPSLIAGLSVGLLAGYGAY, and PAGLVAGLSLMMILRLVLLLL.

It belongs to the TMEM14 family.

The protein localises to the mitochondrion membrane. It localises to the endoplasmic reticulum membrane. Its function is as follows. Inhibits apoptosis via negative regulation of the mitochondrial outer membrane permeabilization involved in apoptotic signaling pathway. In Mus musculus (Mouse), this protein is Transmembrane protein 14A (Tmem14a).